The chain runs to 284 residues: GPN-loop GTPase 3 (284 aa).

Residue 13–18 (GSGKST) participates in GTP binding. Positions 72 to 74 (GPN) match the Gly-Pro-Asn (GPN)-loop; involved in dimer interface motif. 174-177 (TKMD) is a GTP binding site. The interval 261 to 284 (KEPKEHEDESSSMFDEYFQEHQNE) is disordered.

It belongs to the GPN-loop GTPase family. As to quaternary structure, heterodimer with GPN1. Binds to RNA polymerase II (RNAPII). Interacts directly with subunits RPB4 and RPB7 and the CTD of RPB1.

Functionally, small GTPase required for proper localization of RNA polymerase II (RNAPII). May act at an RNAP assembly step prior to nuclear import. The chain is GPN-loop GTPase 3 from Bos taurus (Bovine).